We begin with the raw amino-acid sequence, 488 residues long: Prostaglandin E2 receptor EP4 subtype (488 aa).

Residues 1–19 (MSTPVANASASSMPELLNN) lie on the Extracellular side of the membrane. An N-linked (GlcNAc...) asparagine glycan is attached at asparagine 7. A helical membrane pass occupies residues 20 to 43 (PVTIPAVMFIFGVVGNLVAIVVLC). The Cytoplasmic portion of the chain corresponds to 44-55 (KSRKEQKETTFY). Residues 56–79 (TLVCGLAVTDLLGTLLVSPVTIAT) traverse the membrane as a helical segment. Residues 80–96 (YMKGQWPGGQALCDYST) lie on the Extracellular side of the membrane. An intrachain disulfide couples cysteine 92 to cysteine 170. A helical membrane pass occupies residues 97-115 (FILLFFGLSGLSIICAMSI). Topologically, residues 116–135 (ERYLAINHAYFYSHYVDKRL) are cytoplasmic. A helical transmembrane segment spans residues 136–160 (AGLTLFAVYASNVLFCALPNMGLGR). Over 161 to 184 (SRLQFPDTWCFIDWRTNVTAHAAF) the chain is Extracellular. Asparagine 177 carries N-linked (GlcNAc...) asparagine glycosylation. The chain crosses the membrane as a helical span at residues 185 to 211 (SYMYAGFSSFLILATVLCNVLVCGALL). Residues 212–270 (RMHRQFMRRTSLGTEQHHAAAAAAVTSAACRGHPTASPALPRLSDFRRRRSFRRIAGAE) are Cytoplasmic-facing. A helical membrane pass occupies residues 271–298 (IQMVILLIATSLVVLICSIPLVVRVFIN). The Extracellular segment spans residues 299 to 315 (QLYQPDLVREISQNPDL). The chain crosses the membrane as a helical span at residues 316-335 (QAIRIASVNPILDPWIYILL). Over 336–488 (RKTVLSKAIE…ETLNLSEKCI (153 aa)) the chain is Cytoplasmic. A compositionally biased stretch (basic and acidic residues) spans 358–371 (RRDRSGQHCSDSRR). Residues 358 to 381 (RRDRSGQHCSDSRRTSSAMSTHSR) are disordered. The span at 372-381 (TSSAMSTHSR) shows a compositional bias: polar residues. Phosphoserine is present on residues serine 377, serine 380, serine 382, and serine 385. The tract at residues 456 to 475 (EVGGGGRAGPTPKGSSLQVT) is disordered.

The protein belongs to the G-protein coupled receptor 1 family. In terms of assembly, interacts with FEM1A. Phosphorylation mediates agonist-mediated desensitization by promoting cytoplasmic retention. In terms of tissue distribution, highly expressed in intestine, duodenal epithelium, uterus, thymus and adrenal cortex. Lower but significant expression in whole adrenal, lung, spleen, stomach, and kidney. In this latter organ, the receptor is localized in the glomeruli and the transitional epithelium of the renal calyx.

The protein localises to the cell membrane. Its function is as follows. Receptor for prostaglandin E2 (PGE2). The activity of this receptor is mediated by G(s) proteins that stimulate adenylate cyclase. Has a relaxing effect on smooth muscle. May play an important role in regulating renal hemodynamics, intestinal epithelial transport, adrenal aldosterone secretion, and uterine function. The polypeptide is Prostaglandin E2 receptor EP4 subtype (PTGER4) (Oryctolagus cuniculus (Rabbit)).